Consider the following 349-residue polypeptide: Interleukin-10 receptor subunit beta (349 aa).

Positions 1–19 (MAPCVAGWLGGFLLVPALG) are cleaved as a signal peptide. The Extracellular segment spans residues 20–220 (MIPPPEKVRM…RTGNDEITPS (201 aa)). Fibronectin type-III domains are found at residues 23-111 (PPEK…VEDT) and 112-215 (IIGP…TGND). The N-linked (GlcNAc...) asparagine glycan is linked to N49. An intrachain disulfide couples C66 to C74. N-linked (GlcNAc...) asparagine glycosylation is found at N102, N161, and N199. Cysteines 188 and 209 form a disulfide. The chain crosses the membrane as a helical span at residues 221 to 241 (WIVAIILIVSVLVVFLFLLGC). Topologically, residues 242–349 (FVVLWLIYKK…PKLLTSTSEV (108 aa)) are cytoplasmic. Residue S299 is modified to Phosphoserine. Residues 300–349 (EESEGSKQSPEDNCASEPPSDPGPRELESKDEAPSPPHDDPKLLTSTSEV) form a disordered region. The span at 322-341 (GPRELESKDEAPSPPHDDPK) shows a compositional bias: basic and acidic residues.

It belongs to the type II cytokine receptor family. As to quaternary structure, heterodimer with IFNLR1.

The protein localises to the membrane. Functionally, shared cell surface receptor required for the activation of five class 2 cytokines: IL10, IL22, IL26, IL28, and IFNL1. The IFNLR1/IL10RB dimer is a receptor for the cytokine ligands IFNL2 and IFNL3 and mediates their antiviral activity. The ligand/receptor complex stimulate the activation of the JAK/STAT signaling pathway leading to the expression of IFN-stimulated genes (ISG), which contribute to the antiviral state. The sequence is that of Interleukin-10 receptor subunit beta (Il10rb) from Mus musculus (Mouse).